We begin with the raw amino-acid sequence, 74 residues long: Tau-AnmTx Ueq 12-1 (74 aa).

The first 18 residues, 1-18 (MCLLMLVLGAMYVQGWHS), serve as a signal peptide directing secretion. The propeptide at 19–27 (AGFGKRTLK) is removed in mature form. 5 disulfides stabilise this stretch: Cys30-Cys37, Cys40-Cys71, Cys46-Cys64, Cys51-Cys72, and Cys58-Cys73.

It belongs to the Cnidaria small cysteine-rich protein (SCRiP) family. Detected in mucus secreted from ectoderm.

Its subcellular location is the secreted. Potentiates activation of mammalian TRPA1, a non-selective cation channel involved in perception of pain, in vitro yet has an analgesic and anti-inflammatory effect in vivo. Has antibacterial activity against C.glutamicum (MIC=50 uM) and, to a lesser extent, against S.aureus but not against P.aeruginosa or E.coli. The chain is Tau-AnmTx Ueq 12-1 from Urticina eques (Sea anemone).